A 245-amino-acid polypeptide reads, in one-letter code: Ubiquinone/menaquinone biosynthesis C-methyltransferase UbiE (245 aa).

Residues Thr-71, Asp-92, and 118 to 119 each bind S-adenosyl-L-methionine; that span reads DA.

It belongs to the class I-like SAM-binding methyltransferase superfamily. MenG/UbiE family.

It carries out the reaction a 2-demethylmenaquinol + S-adenosyl-L-methionine = a menaquinol + S-adenosyl-L-homocysteine + H(+). The enzyme catalyses a 2-methoxy-6-(all-trans-polyprenyl)benzene-1,4-diol + S-adenosyl-L-methionine = a 5-methoxy-2-methyl-3-(all-trans-polyprenyl)benzene-1,4-diol + S-adenosyl-L-homocysteine + H(+). It functions in the pathway quinol/quinone metabolism; menaquinone biosynthesis; menaquinol from 1,4-dihydroxy-2-naphthoate: step 2/2. The protein operates within cofactor biosynthesis; ubiquinone biosynthesis. Its function is as follows. Methyltransferase required for the conversion of demethylmenaquinol (DMKH2) to menaquinol (MKH2) and the conversion of 2-polyprenyl-6-methoxy-1,4-benzoquinol (DDMQH2) to 2-polyprenyl-3-methyl-6-methoxy-1,4-benzoquinol (DMQH2). The polypeptide is Ubiquinone/menaquinone biosynthesis C-methyltransferase UbiE (Neisseria meningitidis serogroup C (strain 053442)).